Reading from the N-terminus, the 367-residue chain is Protein TlpB (367 aa).

5 helical membrane-spanning segments follow: residues 15–35 (ILISFLFIISAIAKMYPSPYF), 53–73 (IIAPWFSRILIGIELALGILI), 83–103 (IIPITILLLAVFVGHLSYVTF), 124–144 (IQAIIKNIIAIFLLVYLFFLL), and 153–173 (FYVVIGITLATIISLFLLAPI).

It is found in the membrane. The sequence is that of Protein TlpB (tlpB) from Flavobacterium psychrophilum.